The sequence spans 103 residues: DNA-binding protein TRF1 (103 aa).

Its function is as follows. DNA-binding protein that recognizes the inverted terminal repeats of the pGKl linear DNA plasmids. This chain is DNA-binding protein TRF1 (TRF1), found in Kluyveromyces lactis (strain ATCC 8585 / CBS 2359 / DSM 70799 / NBRC 1267 / NRRL Y-1140 / WM37) (Yeast).